Here is a 392-residue protein sequence, read N- to C-terminus: Immunoglobulin-binding protein EibA (392 aa).

Positions 1–27 are cleaved as a signal peptide; sequence MSKKFTKAVLSAAMAGVLFGVSFDIMA. Residues 28-301 are surface exposed passenger domain; the sequence is AEQSYSALNA…IAANTRTLQQ (274 aa). The Extracellular portion of the chain corresponds to 28-341; sequence AEQSYSALNA…GLFQPYSVGK (314 aa). The stretch at 174–215 forms a coiled coil; the sequence is ESANSTIVANELEAQKGKLDAQKGELEAQKKNLGELTTRTDK. The right-handed coiled-coil (RHcc) stretch occupies residues 187 to 230; sequence AQKGKLDAQKGELEAQKKNLGELTTRTDKIDAAAAATAAKVESR. The saddle domain stretch occupies residues 231-256; that stretch reads TLVGVSSDGTLTRAEGAKNTISVNDG. Positions 257-322 are left-handed coiled-coil (LHcc); sequence LVALSGRTDR…INENHKEMKR (66 aa). The tract at residues 299–341 is outer membrane translocation of the passenger domain; the sequence is LQQHSARLDSQQRQINENHKEMKRAAAQSAALTGLFQPYSVGK. The next 4 beta stranded transmembrane spans lie at 342–352, 355–366, 369–378, and 382–392; these read FNASAAVGGYS, QALAVGVGYRFN, TAAKAGVAFS, and ASWNVGVNFEF. Positions 342-392 are translocator domain; it reads FNASAAVGGYSDEQALAVGVGYRFNEQTAAKAGVAFSDGDASWNVGVNFEF.

It belongs to the autotransporter-2 (AT-2) (TC 1.B.40) family. Eib subfamily. In terms of assembly, homotrimer; can probably form mixed heterotrimers in vivo. Will form mixed heterotrimers with EibD; these are correctly located in the outer membrane and bind IgG Fc, although less well than homotrimers. Does not form trimers with distantly related YadA from Y.enterocolitica; coexpression was lethal and one of the genes is eliminated in vivo. If the full translocator domain (299-392) is exchanged with that of YadA ('368-455'), will form heterotrimers with YadA and vice-versa. In denaturing gels runs as 2 bands of about 121 and 131 kDa; extracting the sample with 88% phenol at 70 degrees Celsius reduces part of the signal to about 45 kDa. Binds the Fc portion of IgG; binds more than 1 Fc per subunit.

The protein localises to the cell surface. The protein resides in the cell outer membrane. Its function is as follows. Binds (in a non-immune fashion) to the Fc portion of human IgG but not IgA; binding occurs on the cell surface. Confers the ability to survive exposure to human serum exposure. Binds to the Fc portion of human IgG and to whole mouse antibodies also via Fc, binds more than 1 Fc or IgG. This Escherichia coli protein is Immunoglobulin-binding protein EibA.